The chain runs to 300 residues: Protoheme IX farnesyltransferase 1 (300 aa).

8 helical membrane-spanning segments follow: residues 26 to 46 (VVVL…RAGV), 48 to 68 (WTVL…AAAV), 97 to 117 (AALA…LTFT), 120 to 140 (LTAW…TGFL), 148 to 168 (IVIG…AATG), 174 to 194 (PLLL…ALAI), 226 to 246 (FALL…VLYL), and 280 to 300 (IYYL…LLNL).

The protein belongs to the UbiA prenyltransferase family. Protoheme IX farnesyltransferase subfamily.

It is found in the cell inner membrane. The catalysed reaction is heme b + (2E,6E)-farnesyl diphosphate + H2O = Fe(II)-heme o + diphosphate. It functions in the pathway porphyrin-containing compound metabolism; heme O biosynthesis; heme O from protoheme: step 1/1. Functionally, converts heme B (protoheme IX) to heme O by substitution of the vinyl group on carbon 2 of heme B porphyrin ring with a hydroxyethyl farnesyl side group. The chain is Protoheme IX farnesyltransferase 1 from Pseudomonas fluorescens (strain ATCC BAA-477 / NRRL B-23932 / Pf-5).